Here is a 276-residue protein sequence, read N- to C-terminus: Small ribosomal subunit protein uS3 (276 aa).

A KH type-2 domain is found at 43–111; it reads IRQLMSTGME…QVQLNILEVK (69 aa). Positions 218-227 are enriched in low complexity; it reads AQAASAPSRG. Residues 218–276 are disordered; it reads AQAASAPSRGPRSDRGGRPGGADRGDRRRRNDRPAADAAPAAEAPAVEAAPAAAEGGQA. A compositionally biased stretch (basic and acidic residues) spans 228-243; sequence PRSDRGGRPGGADRGD. Residues 253-276 show a composition bias toward low complexity; sequence ADAAPAAEAPAVEAAPAAAEGGQA.

Belongs to the universal ribosomal protein uS3 family. In terms of assembly, part of the 30S ribosomal subunit. Forms a tight complex with proteins S10 and S14.

Its function is as follows. Binds the lower part of the 30S subunit head. Binds mRNA in the 70S ribosome, positioning it for translation. The chain is Small ribosomal subunit protein uS3 from Pseudarthrobacter chlorophenolicus (strain ATCC 700700 / DSM 12829 / CIP 107037 / JCM 12360 / KCTC 9906 / NCIMB 13794 / A6) (Arthrobacter chlorophenolicus).